The sequence spans 348 residues: N-(sulfonatooxy)prop-2-enimidothioate sulfolyase (348 aa).

7 Kelch repeats span residues 1 to 33, 34 to 85, 87 to 133, 139 to 194, 209 to 254, 259 to 314, and 322 to 348; these read MARTLQGEWMKVEQKGGQVPAPRSSHGIAVIGD, KLYC…VAVG, KLYV…FHSM, HVYV…VVQG, KIPT…FAHA, YIII…ASTT, and GLLVHGGKLMTNERTDEMYFFAVNSST. Residues Glu-46, Arg-94, Thr-129, Phe-130, and Arg-157 each coordinate a (Z)-N-(sulfonatooxy)alkanimidothioate. Arg-94 acts as the Proton donor in catalysis. Arg-157 serves as the catalytic Proton donor. Glu-220 acts as the Proton acceptor in catalysis. Glu-266 is a binding site for Fe(2+). Arg-269 provides a ligand contact to a (Z)-N-(sulfonatooxy)alkanimidothioate. Residues Asp-270 and His-274 each coordinate Fe(2+). 2 residues coordinate a (Z)-N-(sulfonatooxy)alkanimidothioate: Trp-309 and Val-310.

In terms of assembly, homodimer. The cofactor is Fe(2+). In terms of tissue distribution, expressed constitutively in roots, stems, leaves, flowers, siliques and seedlings.

The enzyme catalyses (Z)-N-(sulfonatooxy)prop-2-enimidothioate = allyl thiocyanate + sulfate. It catalyses the reaction (Z)-N-(sulfonatooxy)prop-2-enimidothioate = 2-(thiiran-2-yl)acetonitrile + sulfate. It carries out the reaction (Z)-N-(sulfonatooxy)prop-2-enimidothioate = allyl isothiocyanate + sulfate. The catalysed reaction is (Z)-phenyl-N-(sulfonatooxy)methanimidothioate = phenylacetonitrile + sulfur + sulfate. The enzyme catalyses glucoerucin + H2O = (Z)-4-methylsulfanylbutyl-N-(sulfonatooxy)methanimidothioate + D-glucose. It catalyses the reaction (Z)-4-methylsulfanylbutyl-N-(sulfonatooxy)methanimidothioate = 5-(methylsulfanyl)pentanenitrile + sulfur + sulfate + H(+). Its activity is regulated as follows. Stimulated by the presence of Fe(2+) leading to an increase formation of both thiocyanate and epithionitrile with allylglucosinolate as substrate in the presence of myrosinase. Repressed by EDTA. In terms of biological role, specifier protein that contributes to constitutive and herbivore-induced simple nitrile formation. Catalyzes allylthiocyanate and corresponding epithionitrile formation from allylglucosinolate in the presence of myrosinase. Also converts aliphatic glucosinolates, such as indol-3-ylmethylglucosinolate, 4-methylsulfinylbutylglucosinolate, 4-methylthiobutyl- and benzylisothiocyanate, to simple nitriles. The chain is N-(sulfonatooxy)prop-2-enimidothioate sulfolyase from Thlaspi arvense (Field penny-cress).